Consider the following 132-residue polypeptide: Minor structural pilin EpdB (132 aa).

A propeptide spanning residues 1 to 4 is cleaved from the precursor; sequence MSKG. Positions 9–19 match the QXSXEXXXL motif; the sequence is EFIVLFLALLV.

Post-translationally, the N-terminus is probably cleaved by the prepilin peptidase EppA, which recognizes the class III signal sequence.

The protein resides in the secreted. It localises to the cell surface. It is found in the fimbrium. Functionally, minor component of the type IV-like pili. Essential for pili formation. The polypeptide is Minor structural pilin EpdB (Methanococcus maripaludis (strain DSM 14266 / JCM 13030 / NBRC 101832 / S2 / LL)).